Here is a 66-residue protein sequence, read N- to C-terminus: Ribosome biogenesis protein Nop10 (66 aa).

Belongs to the NOP10 family.

Involved in ribosome biogenesis; more specifically in 18S rRNA pseudouridylation and in cleavage of pre-rRNA. The chain is Ribosome biogenesis protein Nop10 from Desulfurococcus amylolyticus (strain DSM 18924 / JCM 16383 / VKM B-2413 / 1221n) (Desulfurococcus kamchatkensis).